Consider the following 232-residue polypeptide: Orotidine 5'-phosphate decarboxylase (232 aa).

Residues Asp13, Lys35, 62–71, Thr122, Arg182, Gln191, Gly211, and Arg212 contribute to the substrate site; that span reads DLKFHDIPNT. Catalysis depends on Lys64, which acts as the Proton donor.

It belongs to the OMP decarboxylase family. Type 1 subfamily. As to quaternary structure, homodimer.

It carries out the reaction orotidine 5'-phosphate + H(+) = UMP + CO2. Its pathway is pyrimidine metabolism; UMP biosynthesis via de novo pathway; UMP from orotate: step 2/2. In terms of biological role, catalyzes the decarboxylation of orotidine 5'-monophosphate (OMP) to uridine 5'-monophosphate (UMP). The polypeptide is Orotidine 5'-phosphate decarboxylase (Pseudomonas syringae pv. syringae (strain B728a)).